The chain runs to 113 residues: Ig heavy chain V-III region A4 (113 aa).

The Ig-like domain occupies 1–113 (EVKLEESGGG…YWGQGTLVTV (113 aa)). An intrachain disulfide couples Cys22 to Cys98.

The polypeptide is Ig heavy chain V-III region A4 (Mus musculus (Mouse)).